A 453-amino-acid chain; its full sequence is tRNA modification GTPase MnmE (453 aa).

Residues arginine 28, glutamate 86, and lysine 125 each contribute to the (6S)-5-formyl-5,6,7,8-tetrahydrofolate site. One can recognise a TrmE-type G domain in the interval 221–375 (GIKIAIVGEP…LIKYLEETSL (155 aa)). Asparagine 231 provides a ligand contact to K(+). GTP contacts are provided by residues 231-236 (NAGKSS), 250-256 (TNIPGTT), and 276-279 (DTAG). Serine 235 is a Mg(2+) binding site. 3 residues coordinate K(+): threonine 250, isoleucine 252, and threonine 255. Threonine 256 lines the Mg(2+) pocket. Lysine 453 provides a ligand contact to (6S)-5-formyl-5,6,7,8-tetrahydrofolate.

This sequence belongs to the TRAFAC class TrmE-Era-EngA-EngB-Septin-like GTPase superfamily. TrmE GTPase family. In terms of assembly, homodimer. Heterotetramer of two MnmE and two MnmG subunits. K(+) is required as a cofactor.

It is found in the cytoplasm. Its function is as follows. Exhibits a very high intrinsic GTPase hydrolysis rate. Involved in the addition of a carboxymethylaminomethyl (cmnm) group at the wobble position (U34) of certain tRNAs, forming tRNA-cmnm(5)s(2)U34. The protein is tRNA modification GTPase MnmE of Mycoplasmoides gallisepticum (strain R(low / passage 15 / clone 2)) (Mycoplasma gallisepticum).